We begin with the raw amino-acid sequence, 245 residues long: Polyhedrin (245 aa).

This sequence belongs to the polyhedrin family.

Major component of the virus occlusion bodies, which are large proteinaceous structures (polyhedra), that protect the virus from the outside environment for extended periods until they are ingested by insect larvae. This Bombyx mori nuclear polyhedrosis virus (BmNPV) protein is Polyhedrin (PH).